Here is a 335-residue protein sequence, read N- to C-terminus: Biotin synthase (335 aa).

Residues 1-20 (MVSVGTQSHSGRDQAEQNPS) are disordered. Residues 59-284 (GHLQKSSLLS…MMPQSMVRLS (226 aa)) enclose the Radical SAM core domain. Cys74, Cys78, and Cys81 together coordinate [4Fe-4S] cluster. [2Fe-2S] cluster contacts are provided by Cys118, Cys150, Cys210, and Arg282.

Belongs to the radical SAM superfamily. Biotin synthase family. In terms of assembly, homodimer. [4Fe-4S] cluster is required as a cofactor. [2Fe-2S] cluster serves as cofactor.

It catalyses the reaction (4R,5S)-dethiobiotin + (sulfur carrier)-SH + 2 reduced [2Fe-2S]-[ferredoxin] + 2 S-adenosyl-L-methionine = (sulfur carrier)-H + biotin + 2 5'-deoxyadenosine + 2 L-methionine + 2 oxidized [2Fe-2S]-[ferredoxin]. It participates in cofactor biosynthesis; biotin biosynthesis; biotin from 7,8-diaminononanoate: step 2/2. Its function is as follows. Catalyzes the conversion of dethiobiotin (DTB) to biotin by the insertion of a sulfur atom into dethiobiotin via a radical-based mechanism. This chain is Biotin synthase, found in Zymomonas mobilis subsp. mobilis (strain ATCC 31821 / ZM4 / CP4).